We begin with the raw amino-acid sequence, 127 residues long: Biogenesis of lysosome-related organelles complex 1 subunit 2 (127 aa).

This sequence belongs to the BLOC1S2 family. As to quaternary structure, component of the biogenesis of lysosome-related organelles complex-1 (BLOC-1). Interacts with BLOS1 and SNX1.

The protein localises to the cytoplasm. Its subcellular location is the endosome. Its function is as follows. Component of the biogenesis of lysosome-related organelles complex-1 (BLOC-1), a complex that mediates the vacuolar degradative transport via the intracellular vesicle trafficking from the endosome to the vacuole. This Arabidopsis thaliana (Mouse-ear cress) protein is Biogenesis of lysosome-related organelles complex 1 subunit 2 (BLOS2).